We begin with the raw amino-acid sequence, 155 residues long: MGASVKPAARRNARQFALQAIYSWQITKENIATVEEQFLSGGKYDEEEHHAAEPALAMPETDVAYFRDLLTGVALSHMELDSKLRPFVSRPMQDLDLMELALLRLAMYEMTRREDVPYKVVINEAIELAKVFAAEDSHKFVNGVLDKAAPHVRKK.

The protein belongs to the NusB family.

In terms of biological role, involved in transcription antitermination. Required for transcription of ribosomal RNA (rRNA) genes. Binds specifically to the boxA antiterminator sequence of the ribosomal RNA (rrn) operons. The protein is Transcription antitermination protein NusB of Vibrio atlanticus (strain LGP32) (Vibrio splendidus (strain Mel32)).